The primary structure comprises 582 residues: V-type ATP synthase alpha chain (582 aa).

Position 231–238 (231–238 (GPFGSGKT)) interacts with ATP.

This sequence belongs to the ATPase alpha/beta chains family.

It carries out the reaction ATP + H2O + 4 H(+)(in) = ADP + phosphate + 5 H(+)(out). Functionally, produces ATP from ADP in the presence of a proton gradient across the membrane. The V-type alpha chain is a catalytic subunit. The chain is V-type ATP synthase alpha chain from Deinococcus geothermalis (strain DSM 11300 / CIP 105573 / AG-3a).